We begin with the raw amino-acid sequence, 1157 residues long: Pesticidal crystal protein Cry9Ca (1157 aa).

Belongs to the delta endotoxin family.

In terms of biological role, promotes colloidosmotic lysis by binding to the midgut epithelial cells of Lepidoptera larvae. Has a fairly broad spectrum of activity against members of the Pyralidae, Plutellidae, Sphingidae and Noctuidae families. It was the first insecticidal crystal protein characterized with activity against cutworms. No activity is observed against some beetles, such as the Colorado potato beetle. The polypeptide is Pesticidal crystal protein Cry9Ca (cry9Ca) (Bacillus thuringiensis subsp. tolworthi).